An 871-amino-acid chain; its full sequence is Probable LRR receptor-like serine/threonine-protein kinase At1g51810 (871 aa).

The N-terminal stretch at 1-20 is a signal peptide; sequence MERHCLFFVIFSLILHLVQA. At 21 to 512 the chain is on the extracellular side; it reads QDPIGFINLD…GRQIKSMTIP (492 aa). N-linked (GlcNAc...) asparagine glycosylation is found at asparagine 93, asparagine 179, asparagine 229, asparagine 283, asparagine 295, asparagine 396, asparagine 410, asparagine 439, asparagine 458, asparagine 463, and asparagine 489. 3 LRR repeats span residues 405 to 426, 429 to 449, and 453 to 474; these read IITSLNLSSSGLTGIIVLTIQN, NLQELDLSNNNLSGGVPEFLA, and SLLVINLSGNNLSGVVPQKLIE. A helical transmembrane segment spans residues 513 to 533; that stretch reads IVASIGSVVAFTVALMIFCVV. Over 534–871 the chain is Cytoplasmic; it reads RKNNPSNDEA…FGTEVAPMAR (338 aa). Residue threonine 568 is modified to Phosphothreonine. Positions 577–850 constitute a Protein kinase domain; sequence NNFQKILGKG…QVVFELKECL (274 aa). ATP contacts are provided by residues 583–591 and lysine 605; that span reads LGKGGFGIV. A Phosphotyrosine modification is found at tyrosine 650. Aspartate 702 serves as the catalytic Proton acceptor. Residue serine 736 is modified to Phosphoserine. 2 positions are modified to phosphothreonine: threonine 737 and threonine 742. Tyrosine 750 is subject to Phosphotyrosine.

Belongs to the protein kinase superfamily. Ser/Thr protein kinase family.

The protein resides in the membrane. The enzyme catalyses L-seryl-[protein] + ATP = O-phospho-L-seryl-[protein] + ADP + H(+). It catalyses the reaction L-threonyl-[protein] + ATP = O-phospho-L-threonyl-[protein] + ADP + H(+). In Arabidopsis thaliana (Mouse-ear cress), this protein is Probable LRR receptor-like serine/threonine-protein kinase At1g51810.